The sequence spans 78 residues: Large ribosomal subunit protein bL28 (78 aa).

Positions 1–21 are disordered; it reads MSRVCQVTGKKPMVGNNRSHA.

This sequence belongs to the bacterial ribosomal protein bL28 family.

The sequence is that of Large ribosomal subunit protein bL28 from Shewanella piezotolerans (strain WP3 / JCM 13877).